Consider the following 548-residue polypeptide: Beta-lactamase-like protein 2 (548 aa).

Positions 1-24 are cleaved as a signal peptide; the sequence is MKIMNKQSITIFLIICFLINLILS. N-linked (GlcNAc...) asparagine glycans are attached at residues N237, N258, N443, and N459.

Belongs to the beta-lactamase family.

The protein resides in the secreted. The protein is Beta-lactamase-like protein 2 of Dictyostelium discoideum (Social amoeba).